Consider the following 228-residue polypeptide: Sodium channel regulatory subunit beta-4 (228 aa).

The first 30 residues, 1 to 30, serve as a signal peptide directing secretion; that stretch reads MPGARDQGAARARWLGIGLLGLFLLPVSLS. Positions 31–148 constitute an Ig-like C2-type domain; that stretch reads LEVSVGKATT…NDFQHQATIF (118 aa). The Extracellular portion of the chain corresponds to 31 to 162; that stretch reads LEVSVGKATT…DKLEEVDNTV (132 aa). Residues asparagine 45, asparagine 71, and asparagine 113 are each glycosylated (N-linked (GlcNAc...) asparagine). A disulfide bond links cysteine 53 and cysteine 131. The helical transmembrane segment at 163–183 threads the bilayer; sequence TLIILGVVGGVIGLLIFILLV. Residues 184–228 lie on the Cytoplasmic side of the membrane; the sequence is KKFIAFIIKKTQEKKKECLVSSSGNDNTENGLPGSKAEEKAPTKV. The tract at residues 198–228 is disordered; sequence KKECLVSSSGNDNTENGLPGSKAEEKAPTKV. Residues 203-213 show a composition bias toward polar residues; it reads VSSSGNDNTEN. Residues 219–228 show a composition bias toward basic and acidic residues; that stretch reads KAEEKAPTKV.

This sequence belongs to the sodium channel auxiliary subunit SCN4B (TC 8.A.17) family. A voltage-gated sodium (Nav) channel consists of an ion-conducting pore-forming alpha subunit functional on its own that is regulated by one or more beta subunits. The beta subunit SCN4B is disulfide-linked to the pore-forming alpha subunit. Interacts with SCN1A; regulatory subunit of SCN1A/Nav1.1. Interacts with SCN2A; regulatory subunit of SCN2A/Nav1.2. Post-translationally, contains an interchain disulfide bond with SCN2A.

Its subcellular location is the cell membrane. Functionally, regulatory subunit of multiple voltage-gated sodium (Nav) channels directly mediating the depolarization of excitable membranes. Navs, also called VGSCs (voltage-gated sodium channels) or VDSCs (voltage-dependent sodium channels), operate by switching between closed and open conformations depending on the voltage difference across the membrane. In the open conformation they allow Na(+) ions to selectively pass through the pore, along their electrochemical gradient. The influx of Na+ ions provokes membrane depolarization, initiating the propagation of electrical signals throughout cells and tissues. The accessory beta subunits participate in localization and functional modulation of the Nav channels. Modulates the activity of SCN1A/Nav1.1. Modulates the activity of SCN2A/Nav1.2. The polypeptide is Sodium channel regulatory subunit beta-4 (Bos taurus (Bovine)).